We begin with the raw amino-acid sequence, 552 residues long: MPVAATNSESAMQQVLDNLGSLPNATGAAELDLIFLRGIMESPIVRSLAKAHERLEETKLEAVRDNNLELVQEILRDLAELAEQSSTAAELARILQEPHFQSLLETHDSVASKTYETPPPSPGLDPTFSNQPVPPDAVRMVGIRKTAGEHLGVTFRVEGGELVIARILHGGMVAQQGLLHVGDIIKEVNGQPVGSDPRALQELLRSASGSVILKILPSYQEPHLPRQVFVKCHFDYDPARDSLSPCKEAGLRFNAGDLLQIVNQDDANWWQACHVEGGSAGLIPSQLLEEKRKAFVKRDLELTPTSGTLCGSLSGKKKKRMMYLTTKNAEFDRHELLIYEEVARMPPFRRKTLVLIGAQGVGRRSLKNKLILWDPDRYGTTVPYTSRRPKDSEREGQGYSFVSRGEMEADIRAGRYLEHGEYEGNLYGTRIDSIRGVVASGKVCVLDVNPQAVKVLRTAEFVPYVVFIEAPDYETLRAMNRAALESGVSTKQLTEADLRRTVEESSRIQRGYGHYFDLSLVNSNLERTFRELQTAMEKLRTEPQWVPVSWVY.

L27 domains are found at residues 8–59 (SESA…EETK) and 60–118 (LEAV…YETP). Ser42 carries the phosphoserine modification. A Phosphothreonine modification is found at Thr117. Residue Ser121 is modified to Phosphoserine. The region spanning 140–219 (MVGIRKTAGE…SVILKILPSY (80 aa)) is the PDZ domain. In terms of domain architecture, SH3 spans 225–293 (PRQVFVKCHF…PSQLLEEKRK (69 aa)). A Guanylate kinase-like domain is found at 350–537 (RKTLVLIGAQ…TFRELQTAME (188 aa)).

This sequence belongs to the MAGUK family. In terms of assembly, can homomultimerise. Interacts with CACNG2. Interacts (via the SH3-Guanylate kinase-like sub-module) with DLG4/PSD95 and DLGAP1/GKAP. Interacts (via the PDZ domain) with CADM1 (via C-terminus). Interacts with KCNN2/SK2 (via N-terminal domain). Interacts with SRC. Phosphorylated by SRC. In terms of tissue distribution, expressed in pyramidal neurons of CA1 region of the hippocampus.

It is found in the cell projection. The protein localises to the dendrite. The protein resides in the postsynaptic density. It localises to the cytoplasm. Its subcellular location is the cytoskeleton. It is found in the membrane. Functionally, postsynaptic MAGUK scaffold protein that links CADM1 cell adhesion molecules to core components of the postsynaptic density. In CA1 pyramidal neurons, required for synaptic KCNN2-containing channel function and long-term potentiation expression. Seems to negatively regulate SRC function in epithelial cells. The protein is MAGUK p55 subfamily member 2 of Mus musculus (Mouse).